Consider the following 193-residue polypeptide: V-type sodium ATPase subunit E (193 aa).

It belongs to the V-ATPase E subunit family. In terms of processing, the N-terminus is blocked.

Its function is as follows. Involved in ATP-driven sodium extrusion. This chain is V-type sodium ATPase subunit E (ntpE), found in Enterococcus hirae (strain ATCC 9790 / DSM 20160 / JCM 8729 / LMG 6399 / NBRC 3181 / NCIMB 6459 / NCDO 1258 / NCTC 12367 / WDCM 00089 / R).